The sequence spans 160 residues: Large ribosomal subunit protein eL21 (160 aa).

This sequence belongs to the eukaryotic ribosomal protein eL21 family.

The protein is Large ribosomal subunit protein eL21 (RPL21) of Encephalitozoon cuniculi (strain GB-M1) (Microsporidian parasite).